The primary structure comprises 1410 residues: DNA-directed RNA polymerase subunit beta' (1410 aa).

Zn(2+)-binding residues include cysteine 70, cysteine 72, cysteine 85, and cysteine 88. Mg(2+) is bound by residues aspartate 460, aspartate 462, and aspartate 464. Residues cysteine 814, cysteine 888, cysteine 895, and cysteine 898 each contribute to the Zn(2+) site.

The protein belongs to the RNA polymerase beta' chain family. The RNAP catalytic core consists of 2 alpha, 1 beta, 1 beta' and 1 omega subunit. When a sigma factor is associated with the core the holoenzyme is formed, which can initiate transcription. Requires Mg(2+) as cofactor. It depends on Zn(2+) as a cofactor.

It carries out the reaction RNA(n) + a ribonucleoside 5'-triphosphate = RNA(n+1) + diphosphate. Functionally, DNA-dependent RNA polymerase catalyzes the transcription of DNA into RNA using the four ribonucleoside triphosphates as substrates. This chain is DNA-directed RNA polymerase subunit beta', found in Buchnera aphidicola subsp. Cinara cedri (strain Cc).